The chain runs to 283 residues: Dihydropteroate synthase type-1 (283 aa).

The Pterin-binding domain occupies 6–262 (VTVFGILNLT…APGDLRSAIT (257 aa)). Mg(2+) is bound at residue asparagine 13. (7,8-dihydropterin-6-yl)methyl diphosphate-binding positions include aspartate 86, asparagine 105, aspartate 177, lysine 216, and 250 to 252 (RTH).

It belongs to the DHPS family. In terms of assembly, homodimer or homotrimer. Mg(2+) serves as cofactor.

It carries out the reaction (7,8-dihydropterin-6-yl)methyl diphosphate + 4-aminobenzoate = 7,8-dihydropteroate + diphosphate. The protein operates within cofactor biosynthesis; tetrahydrofolate biosynthesis; 7,8-dihydrofolate from 2-amino-4-hydroxy-6-hydroxymethyl-7,8-dihydropteridine diphosphate and 4-aminobenzoate: step 1/2. Catalyzes the condensation of para-aminobenzoate (pABA) with 6-hydroxymethyl-7,8-dihydropterin diphosphate (DHPt-PP) to form 7,8-dihydropteroate (H2Pte), the immediate precursor of folate derivatives. Implicated in resistance to sulfonamide. The chain is Dihydropteroate synthase type-1 (sulI) from Mycolicibacterium fortuitum (Mycobacterium fortuitum).